Consider the following 419-residue polypeptide: Tyrosine--tRNA ligase 2 (419 aa).

Tyr34 lines the L-tyrosine pocket. Residues 39 to 48 (PTGDSMHIGH) carry the 'HIGH' region motif. Positions 168 and 172 each coordinate L-tyrosine. Residues 230 to 234 (KFGKS) carry the 'KMSKS' region motif. ATP is bound at residue Lys233. The S4 RNA-binding domain occupies 352 to 418 (KNIVEWLVDL…GKKNYSLVKL (67 aa)).

Belongs to the class-I aminoacyl-tRNA synthetase family. TyrS type 1 subfamily. Homodimer.

The protein localises to the cytoplasm. It carries out the reaction tRNA(Tyr) + L-tyrosine + ATP = L-tyrosyl-tRNA(Tyr) + AMP + diphosphate + H(+). Catalyzes the attachment of tyrosine to tRNA(Tyr) in a two-step reaction: tyrosine is first activated by ATP to form Tyr-AMP and then transferred to the acceptor end of tRNA(Tyr). The polypeptide is Tyrosine--tRNA ligase 2 (Bacillus cereus (strain ATCC 10987 / NRS 248)).